Consider the following 178-residue polypeptide: Probable DNA-directed RNA polymerase subunit delta (178 aa).

The 68-residue stretch at 14 to 81 (LSLIDVAHFI…GNNTWGLRAW (68 aa)) folds into the HTH HARE-type domain. Disordered regions lie at residues 89 to 122 (EEVQTQTTPKKKRKSDDDDDEDEEILDDDVDYDD) and 141 to 178 (LDEDEDDDDHLPDGIEGDLATVEDDYTDGDYTEDPEDK). Composition is skewed to acidic residues over residues 105–122 (DDDDEDEEILDDDVDYDD), 141–150 (LDEDEDDDDH), and 161–178 (TVEDDYTDGDYTEDPEDK).

It belongs to the RpoE family. As to quaternary structure, RNAP is composed of a core of 2 alpha, a beta and a beta' subunits. The core is associated with a delta subunit and one of several sigma factors.

Participates in both the initiation and recycling phases of transcription. In the presence of the delta subunit, RNAP displays an increased specificity of transcription, a decreased affinity for nucleic acids, and an increased efficiency of RNA synthesis because of enhanced recycling. This chain is Probable DNA-directed RNA polymerase subunit delta, found in Listeria innocua serovar 6a (strain ATCC BAA-680 / CLIP 11262).